A 178-amino-acid polypeptide reads, in one-letter code: NADH-ubiquinone oxidoreductase chain 6 (178 aa).

Helical transmembrane passes span 1–21 (MMTY…VGFS), 25–45 (SPIY…GIVL), 48–68 (GGSF…LVVF), 89–109 (VLLT…YLLL), and 152–172 (YGYW…IVVM).

The protein belongs to the complex I subunit 6 family.

The protein localises to the mitochondrion membrane. It catalyses the reaction a ubiquinone + NADH + 5 H(+)(in) = a ubiquinol + NAD(+) + 4 H(+)(out). Functionally, core subunit of the mitochondrial membrane respiratory chain NADH dehydrogenase (Complex I) that is believed to belong to the minimal assembly required for catalysis. Complex I functions in the transfer of electrons from NADH to the respiratory chain. The immediate electron acceptor for the enzyme is believed to be ubiquinone. The protein is NADH-ubiquinone oxidoreductase chain 6 (MT-ND6) of Pseudosoriculus fumidus (Taiwanese brown-toothed shrew).